A 194-amino-acid polypeptide reads, in one-letter code: MSMLRRPLTQLELCEDDIQWLTDQLNKRVLPAVIVPKCEMMDIDEMEPMDQSEPPRGITRRNLRSADRKNRDVPGPSTGECTRTSIAPTLTSARTPVAAPTLTLSTPVNPVSSAEMLRVMPPRVGRRPRASRSGDNDSPLLFNAYDTPQQGINDESPTPSDSPESPNAHLYGATPGNPTSTSGGPSSNTRSHRH.

Positions 47–194 are disordered; it reads EPMDQSEPPR…PSSNTRSHRH (148 aa). Composition is skewed to polar residues over residues 79–94 and 102–112; these read GECT…TSAR and LTLSTPVNPVS. Composition is skewed to low complexity over residues 154-166 and 174-194; these read DESP…PESP and TPGN…SHRH.

It belongs to the CDC26 family. In terms of assembly, the APC/C complex is probably composed of at least 12 subunits: apc-2, apc-10, apc-11, cdc-26, emb-1, emb-27, emb-30, mat-1, mat-2, mat-3, such-1 and gfi-3.

Its subcellular location is the nucleus. The protein operates within protein modification; protein ubiquitination. Probable component of the anaphase promoting complex/cyclosome (APC/C), a cell cycle-regulated E3 ubiquitin ligase that controls progression through mitosis and the G1 phase of the cell cycle. The APC/C complex acts by mediating ubiquitination and subsequent degradation of target proteins. Developmental role in early embryogenesis and the metaphase to anaphase transition in meiosis and mitosis. Required for embryonic anterior-posterior axis formation. This Caenorhabditis elegans protein is Anaphase-promoting complex subunit CDC26.